The chain runs to 232 residues: 7-cyano-7-deazaguanine synthase (232 aa).

8 to 18 (FSGGQDSTTCL) provides a ligand contact to ATP. Zn(2+) contacts are provided by C187, C196, C199, and C202.

The protein belongs to the QueC family. Zn(2+) is required as a cofactor.

The enzyme catalyses 7-carboxy-7-deazaguanine + NH4(+) + ATP = 7-cyano-7-deazaguanine + ADP + phosphate + H2O + H(+). Its pathway is purine metabolism; 7-cyano-7-deazaguanine biosynthesis. Its function is as follows. Catalyzes the ATP-dependent conversion of 7-carboxy-7-deazaguanine (CDG) to 7-cyano-7-deazaguanine (preQ(0)). The polypeptide is 7-cyano-7-deazaguanine synthase (Vibrio vulnificus (strain YJ016)).